Consider the following 498-residue polypeptide: WD repeat-containing protein 55 homolog (498 aa).

The segment at Met-1–Thr-133 is disordered. Acidic residues-rich tracts occupy residues Asp-12–Met-23, Ile-31–Leu-48, and Ser-83–Asp-95. The segment covering Pro-114–Ala-123 has biased composition (polar residues). WD repeat units follow at residues Lys-155–Leu-194, Val-199–Leu-238, Ala-242–Glu-280, Glu-283–Gln-322, Pro-325–Asp-364, and Gln-409–Asp-448.

Belongs to the WD repeat WDR55 family.

This chain is WD repeat-containing protein 55 homolog, found in Drosophila erecta (Fruit fly).